The sequence spans 322 residues: Fructose-1,6-bisphosphatase class 1 (322 aa).

The Mg(2+) site is built by E84, D103, L105, and D106. Residues 106–109 (DGSS), N198, and K264 each bind substrate. Residue E270 participates in Mg(2+) binding.

The protein belongs to the FBPase class 1 family. In terms of assembly, homotetramer. It depends on Mg(2+) as a cofactor.

The protein localises to the cytoplasm. It catalyses the reaction beta-D-fructose 1,6-bisphosphate + H2O = beta-D-fructose 6-phosphate + phosphate. It functions in the pathway carbohydrate biosynthesis; gluconeogenesis. The polypeptide is Fructose-1,6-bisphosphatase class 1 (Saccharophagus degradans (strain 2-40 / ATCC 43961 / DSM 17024)).